The following is a 147-amino-acid chain: Transthyretin (147 aa).

The first 20 residues, 1 to 20 (MASFRLLLLCLAGLVFVSEA), serve as a signal peptide directing secretion. Sulfocysteine is present on C30. K35 lines the L-thyroxine pocket. A 4-carboxyglutamate modification is found at E62. S72 is modified (phosphoserine). E74 lines the L-thyroxine pocket. An N-linked (GlcNAc...) asparagine glycan is attached at N118. Position 137 (S137) interacts with L-thyroxine.

The protein belongs to the transthyretin family. Homotetramer. Dimer of dimers. In the homotetramer, subunits assemble around a central channel that can accommodate two ligand molecules. Interacts with RBP4. Sulfonation of the reactive cysteine Cys-30 enhances the stability of the native conformation of TTR, avoiding misassembly of the protein leading to amyloid formation. In terms of tissue distribution, highly expressed in the choroid plexus.

Its subcellular location is the secreted. Its function is as follows. Thyroid hormone-binding protein. Probably transports thyroxine from the bloodstream to the brain. The chain is Transthyretin (TTR) from Ovis aries (Sheep).